The chain runs to 64 residues: uncharacterized protein (64 aa).

Residues 41–61 (VFLALKVLGIMVLFYLLDAII) form a helical membrane-spanning segment.

The protein resides in the membrane. This is an uncharacterized protein from Acheta domesticus (House cricket).